The chain runs to 287 residues: tRNA selenocysteine 1-associated protein 1 (287 aa).

2 consecutive RRM domains span residues 3–86 and 96–175; these read ASLW…YATY and YSLF…VAIP.

This sequence belongs to the RRM TRSPAP family. In terms of assembly, component of the tRNA(Sec) complex composed at least of EEFSEC, SECISBP2, SEPHS1, SEPSECS, TRNAU1AP and tRNA(Sec). Associates with mRNP and/or polysomes. Found in a complex with tRNA(Sec). Interacts with SEPSECS. In terms of tissue distribution, ubiquitous.

It is found in the nucleus. The protein localises to the cytoplasm. Its function is as follows. Involved in the early steps of selenocysteine biosynthesis and tRNA(Sec) charging to the later steps resulting in the cotranslational incorporation of selenocysteine into selenoproteins. Stabilizes the SECISBP2, EEFSEC and tRNA(Sec) complex. May be involved in the methylation of tRNA(Sec). Enhances efficiency of selenoproteins synthesis. This Rattus norvegicus (Rat) protein is tRNA selenocysteine 1-associated protein 1 (Trnau1ap).